The primary structure comprises 324 residues: Homocysteine S-methyltransferase 1 (324 aa).

Positions 6–320 (IKELIVEHPG…KDIAEIASAV (315 aa)) constitute a Hcy-binding domain. The Zn(2+) site is built by C238, C305, and C306.

It depends on Zn(2+) as a cofactor.

The protein localises to the cytoplasm. It catalyses the reaction S-methyl-L-methionine + L-homocysteine = 2 L-methionine + H(+). In terms of biological role, homocysteine S-methyltransferase involved in the conversion of S-adenosylmethionine (AdoMet) to methionine to control the methionine/AdoMet ratio. Also converts S-methylmethionine (SMM) to methionine. This Saccharomyces cerevisiae (strain ATCC 204508 / S288c) (Baker's yeast) protein is Homocysteine S-methyltransferase 1 (MHT1).